A 228-amino-acid polypeptide reads, in one-letter code: Protein N-lysine methyltransferase METTL21D (228 aa).

Alanine 2 carries the N-acetylalanine modification. Residues tryptophan 43, 75–77 (GSG), aspartate 96, tryptophan 126, alanine 142, and tyrosine 147 each bind S-adenosyl-L-methionine.

It belongs to the methyltransferase superfamily. METTL21 family. As to quaternary structure, interacts with ALKBH6. Interacts with ASPSCR1 and UBXN6; interaction with ASPSCR1, but not with UBXN6, enhances VCP methylation. As to expression, widely expressed.

Its subcellular location is the cytoplasm. The enzyme catalyses L-lysyl-[protein] + 3 S-adenosyl-L-methionine = N(6),N(6),N(6)-trimethyl-L-lysyl-[protein] + 3 S-adenosyl-L-homocysteine + 3 H(+). Its function is as follows. Protein N-lysine methyltransferase that specifically trimethylates 'Lys-315' of VCP/p97; this modification may decrease VCP ATPase activity. In Mus musculus (Mouse), this protein is Protein N-lysine methyltransferase METTL21D (Vcpkmt).